The chain runs to 197 residues: C-type lectin domain family 3 member A (197 aa).

The first 24 residues, 1-24 (MAKNGLVIYILVITLLLDQTSCHA), serve as a signal peptide directing secretion. Disulfide bonds link Cys-68–Cys-78, Cys-95–Cys-191, and Cys-167–Cys-183. The 119-residue stretch at 74–192 (FHKKCYLAAE…CHSSKRYICE (119 aa)) folds into the C-type lectin domain.

Its subcellular location is the secreted. Promotes cell adhesion to laminin and fibronectin. This chain is C-type lectin domain family 3 member A (CLEC3A), found in Bos taurus (Bovine).